The chain runs to 313 residues: Ribosomal RNA small subunit methyltransferase H (313 aa).

S-adenosyl-L-methionine is bound by residues 35 to 37, Asp-55, Phe-79, Asp-101, and Gln-108; that span reads GGH.

It belongs to the methyltransferase superfamily. RsmH family.

The protein localises to the cytoplasm. It catalyses the reaction cytidine(1402) in 16S rRNA + S-adenosyl-L-methionine = N(4)-methylcytidine(1402) in 16S rRNA + S-adenosyl-L-homocysteine + H(+). Functionally, specifically methylates the N4 position of cytidine in position 1402 (C1402) of 16S rRNA. This chain is Ribosomal RNA small subunit methyltransferase H, found in Edwardsiella ictaluri (strain 93-146).